The sequence spans 712 residues: Eukaryotic peptide chain release factor GTP-binding subunit (712 aa).

The segment covering 1 to 23 has biased composition (polar residues); sequence MSNPQDQLSNDLANASISGDQSK. Disordered regions lie at residues 1–64, 76–115, 132–162, and 184–256; these read MSNP…QYGG, GYQQ…QQQY, PQQQ…ASLN, and TKKV…APVS. Positions 16–143 are several sort of repeats; that stretch reads SISGDQSKQP…QQQQQQTQSQ (128 aa). Composition is skewed to low complexity over residues 24–35 and 48–64; these read QPQQQQPQQQQP and TGGY…QYGG. Composition is skewed to low complexity over residues 132–141 and 190–201; these read PQQQQQQQTQ and AKPAASKEASPA. A charged region spans residues 144–282; that stretch reads GMSLADFQKQ…DEVDEEVVKD (139 aa). Over residues 202–217 the composition is skewed to basic and acidic residues; that stretch reads PKDEEASAEPEAKKES. Residues 218–256 show a composition bias toward low complexity; it reads TPVPASSSPAPAAADSTPAPVKKESTPTPSVASKSAPVS. A tr-type G domain is found at 287 to 512; it reads KDHVSIIFMG…YLDNMDTMNR (226 aa). Residues 296 to 303 form a G1 region; sequence GHVDAGKS. 296–303 provides a ligand contact to GTP; the sequence is GHVDAGKS. The segment at 352 to 356 is G2; it reads GKTIE. At T370 the chain carries Phosphothreonine. Positions 373 to 376 are G3; it reads DAPG. Residues 373–377 and 435–438 each bind GTP; these read DAPGH and NKMD. The tract at residues 435–438 is G4; the sequence is NKMD. Residues 476–478 form a G5 region; sequence SGY.

Belongs to the TRAFAC class translation factor GTPase superfamily. Classic translation factor GTPase family. ERF3 subfamily.

It is found in the cytoplasm. In terms of biological role, involved in translation termination. Stimulates the activity of ERF1. Binds guanine nucleotides. This chain is Eukaryotic peptide chain release factor GTP-binding subunit (SUP35), found in Candida maltosa (Yeast).